The chain runs to 338 residues: 1-aminocyclopropane-1-carboxylate deaminase (338 aa).

The residue at position 51 (Lys51) is an N6-(pyridoxal phosphate)lysine. The active-site Nucleophile is Ser78.

It belongs to the ACC deaminase/D-cysteine desulfhydrase family. In terms of assembly, homotrimer. Pyridoxal 5'-phosphate is required as a cofactor.

It carries out the reaction 1-aminocyclopropane-1-carboxylate + H2O = 2-oxobutanoate + NH4(+). Catalyzes a cyclopropane ring-opening reaction, the irreversible conversion of 1-aminocyclopropane-1-carboxylate (ACC) to ammonia and alpha-ketobutyrate. Allows growth on ACC as a nitrogen source. This chain is 1-aminocyclopropane-1-carboxylate deaminase, found in Paracidovorax citrulli (strain AAC00-1) (Acidovorax citrulli).